The following is a 625-amino-acid chain: Transferrin-binding protein B (625 aa).

An N-terminal signal peptide occupies residues M1–A17. Residue C18 is the site of N-palmitoyl cysteine attachment. The S-diacylglycerol cysteine moiety is linked to residue C18. Disordered regions lie at residues F25–N52, K99–H125, V275–Y298, and F584–A610. Positions K276–T292 are enriched in basic and acidic residues. The segment covering N587–S605 has biased composition (polar residues).

This sequence belongs to the TbpB family.

It localises to the cell outer membrane. It is found in the cell surface. In terms of biological role, haemophilus acquires iron by extracting it from serum transferrin (TF) in its human host. Acts as a transferrin receptor and is required for transferrin utilization. In Haemophilus influenzae (strain ATCC 51907 / DSM 11121 / KW20 / Rd), this protein is Transferrin-binding protein B (tbpB).